A 142-amino-acid chain; its full sequence is HTH-type transcriptional regulator MntR (142 aa).

Residues 1 to 63 (MPTPSMEDYI…YEKYRGLILT (63 aa)) enclose the HTH dtxR-type domain. Mn(2+) is bound by residues Asp8, Glu11, His77, Glu99, Glu102, and His103.

It belongs to the DtxR/MntR family. Homodimer.

The protein resides in the cytoplasm. With respect to regulation, DNA binding is strongly activated by Mn(2+). Functionally, central regulator of manganese homeostasis. The protein is HTH-type transcriptional regulator MntR of Listeria innocua serovar 6a (strain ATCC BAA-680 / CLIP 11262).